The following is a 646-amino-acid chain: Ribonuclease Y (646 aa).

The chain crosses the membrane as a helical span at residues 4-24 (VLVVLLSLVLVVLSVLILAVA). Disordered stretches follow at residues 43–62 (PRTP…DFDE) and 69–118 (LPAP…HGGS). In terms of domain architecture, KH spans 336 to 402 (VVTVLHLPGD…RITLAALVSD (67 aa)). Residues 462 to 555 (VLAHLIESAH…TQAADQISGG (94 aa)) enclose the HD domain.

Belongs to the RNase Y family.

Its subcellular location is the cell membrane. Endoribonuclease that initiates mRNA decay. The sequence is that of Ribonuclease Y from Frankia casuarinae (strain DSM 45818 / CECT 9043 / HFP020203 / CcI3).